The chain runs to 369 residues: UDP-N-acetylglucosamine--N-acetylmuramyl-(pentapeptide) pyrophosphoryl-undecaprenol N-acetylglucosamine transferase (369 aa).

Residues 10–12, Asn-124, Arg-166, Ser-196, Ile-251, and Gln-296 each bind UDP-N-acetyl-alpha-D-glucosamine; that span reads TAG.

The protein belongs to the glycosyltransferase 28 family. MurG subfamily.

Its subcellular location is the cell membrane. The enzyme catalyses di-trans,octa-cis-undecaprenyl diphospho-N-acetyl-alpha-D-muramoyl-L-alanyl-D-glutamyl-meso-2,6-diaminopimeloyl-D-alanyl-D-alanine + UDP-N-acetyl-alpha-D-glucosamine = di-trans,octa-cis-undecaprenyl diphospho-[N-acetyl-alpha-D-glucosaminyl-(1-&gt;4)]-N-acetyl-alpha-D-muramoyl-L-alanyl-D-glutamyl-meso-2,6-diaminopimeloyl-D-alanyl-D-alanine + UDP + H(+). Its pathway is cell wall biogenesis; peptidoglycan biosynthesis. Functionally, cell wall formation. Catalyzes the transfer of a GlcNAc subunit on undecaprenyl-pyrophosphoryl-MurNAc-pentapeptide (lipid intermediate I) to form undecaprenyl-pyrophosphoryl-MurNAc-(pentapeptide)GlcNAc (lipid intermediate II). This is UDP-N-acetylglucosamine--N-acetylmuramyl-(pentapeptide) pyrophosphoryl-undecaprenol N-acetylglucosamine transferase from Acetivibrio thermocellus (strain ATCC 27405 / DSM 1237 / JCM 9322 / NBRC 103400 / NCIMB 10682 / NRRL B-4536 / VPI 7372) (Clostridium thermocellum).